Consider the following 452-residue polypeptide: Probable ECA polymerase (452 aa).

Transmembrane regions (helical) follow at residues 6–26, 37–57, 63–83, 118–138, 155–175, 181–201, 207–227, 228–248, 341–361, 378–398, and 410–430; these read FSGLLVVWLLSTLFIATLTWF, VFFSLLFLLTFFFGFPLTSVL, VGVAPPEILLQALLSAACFYG, VILMGIALVSVAIFFMHNGFL, GVALKRFFYFFIPAMLVVYFL, AWLFFLVSTVAFGLLTYMIVG, IIIAFAIFLFIGIIRGWISLW, MLAAAGVLGIVGMFWLALKRY, LVVMGGALFIPLGAIVVGLII, YKAAILHSFCFGAIFNMIVLV, and VFFLVVFGASLLVAKLLFWLF.

This sequence belongs to the WzyE family. In terms of assembly, probably part of a complex composed of WzxE, WzyE and WzzE.

The protein resides in the cell inner membrane. It participates in bacterial outer membrane biogenesis; enterobacterial common antigen biosynthesis. In terms of biological role, probably involved in the polymerization of enterobacterial common antigen (ECA) trisaccharide repeat units. This Salmonella gallinarum (strain 287/91 / NCTC 13346) protein is Probable ECA polymerase.